The following is an 839-amino-acid chain: Sodium/hydrogen exchanger 3 (839 aa).

Positions 1-32 (MPLGVRGTRREFRFPVWGLLLLALWMLPRALG) are cleaved as a signal peptide. Residues 33 to 56 (VEEIPGPDSHEKQGFQIVTFKWHH) are Extracellular-facing. The helical transmembrane segment at 57-79 (VQDPYIIALWILVASLAKIVFHL) threads the bilayer. Residues 80–87 (SHKVTSVV) lie on the Cytoplasmic side of the membrane. A helical membrane pass occupies residues 88-107 (PESALLIVLGLILGGIVWAA). Topologically, residues 108-116 (DHIASFTLT) are extracellular. The chain crosses the membrane as a helical span at residues 117 to 134 (PTVFFFYLLPPIVLDAGY). Over 135-137 (FMP) the chain is Cytoplasmic. Residues 138-173 (NRLFFGNLGTILLYAVIGTVWNAATTGLSLYGVYLS) form a helical membrane-spanning segment. Residues G143, G146, and T147 each coordinate a 1,2-diacyl-sn-glycero-3-phospho-(1D-myo-inositol). Over 174–186 (GIMGDLSIGLLDF) the chain is Extracellular. The helical transmembrane segment at 187–208 (LLFGSLIAAVDPVAVLAVFEEV) threads the bilayer. At 209-210 (HV) the chain is on the cytoplasmic side. Residues 211–242 (NDVLFIIVFGESLLNDAVTVVLYNVFDSFVSL) form a helical membrane-spanning segment. At 243 to 249 (GADKVTG) the chain is on the extracellular side. A helical membrane pass occupies residues 250 to 284 (VDCVKGIVSFFVVSLGGTLIGIIFAFLLSLVTRFT). Over 285 to 286 (KH) the chain is Cytoplasmic. A helical membrane pass occupies residues 287–309 (VRIIEPGFVFIISYLSYLTSEML). At 310-311 (SL) the chain is on the extracellular side. Residues 312-328 (SAILAITFCGICCQKYV) traverse the membrane as a helical segment. Over 329–335 (KANISEQ) the chain is Cytoplasmic. The chain crosses the membrane as a helical span at residues 336–364 (SATTVRYTMKMLASGAETIIFMFLGISAV). Residues 365–372 (DPAIWTWN) lie on the Extracellular side of the membrane. Residues 373–394 (TAFILLTLVFISVYRAIGVVLQ) form a helical membrane-spanning segment. Topologically, residues 395–407 (TWLLNKYRMVQLE) are cytoplasmic. Position 403 (M403) interacts with a 1,2-diacyl-sn-glycero-3-phospho-(1D-myo-inositol). Residues 408–431 (IIDQVVMSYGGLRGAVAYALVVLL) form a helical membrane-spanning segment. Residues 432 to 438 (DEKKVKE) lie on the Extracellular side of the membrane. The helical transmembrane segment at 439–472 (KNLFVSTTIIVVFFTVIFQGLTIKPLVQWLKVKK) threads the bilayer. Residues 473–839 (SEHREPKLNE…RSFLPESTHM (367 aa)) lie on the Cytoplasmic side of the membrane. A 1,2-diacyl-sn-glycero-3-phospho-(1D-myo-inositol) is bound by residues Q502, I503, and H505. Phosphoserine occurs at positions 560 and 568. An interaction with EZR region spans residues 581 to 595 (RPSTVEASVSYLLRE). The interval 596–673 (NVSTVCLDMQ…RKRLESFKST (78 aa)) is interaction with NHERF4. The interval 597–701 (VSTVCLDMQA…GQKRRNSSIP (105 aa)) is interaction with AHCYL1. S598 and S613 each carry phosphoserine. At S669 the chain carries Phosphoserine; by SGK1. Residues 688-697 (KRERGQKRRN) are compositionally biased toward basic residues. The disordered stretch occupies residues 688 to 710 (KRERGQKRRNSSIPNGKIPMESP). Residues S724, S815, and S818 each carry the phosphoserine modification.

It belongs to the monovalent cation:proton antiporter 1 (CPA1) transporter (TC 2.A.36) family. In terms of assembly, homodimer. Found in the forms of complex and dynamic macromolecular complexes. Binds NHERF1 and NHERF2. Interacts with CHP1, CHP2 and SHANK2. Interacts with NHERF4 and interactions decrease in response to elevated calcium ion levels. Interacts with PDZK1 (via C-terminal PDZ domain). Interacts with AHCYL1; the interaction is required for SLC9A3 activity. Interacts with EZR; interaction targets SLC9A3 to the apical membrane. Interacts with SNX27 (via PDZ domains); directs SLC9A3 membrane insertion from early endosomes to the plasma membrane. Phosphorylated by PKA, which inhibits activity. Phosphorylation at Ser-669 by SGK1 is associated with increased abundance at the cell membrane.

It is found in the apical cell membrane. The protein localises to the cell membrane. Its subcellular location is the recycling endosome membrane. The protein resides in the early endosome membrane. It carries out the reaction Na(+)(in) + H(+)(out) = Na(+)(out) + H(+)(in). With respect to regulation, seems to switch between active and inactive modes in response to various stimuli. Activated directly or indirectly by membrane phosphatidylinositol (PIs). Regulated by a variety of auxiliary proteins, which facilitate the maturation, cell surface expression and function of the transporter. Inhibited specifically by the drug tenapanor. In terms of biological role, plasma membrane Na(+)/H(+) antiporter. Exchanges intracellular H(+) ions for extracellular Na(+) in 1:1 stoichiometry, playing a key role in salt and fluid absorption and pH homeostasis. Major apical Na(+)/H(+) exchanger in kidney and intestine playing an important role in renal and intestine Na(+) absorption and blood pressure regulation. This is Sodium/hydrogen exchanger 3 (SLC9A3) from Didelphis virginiana (North American opossum).